The sequence spans 103 residues: Flagellar hook-basal body complex protein FliE (103 aa).

It belongs to the FliE family.

It localises to the bacterial flagellum basal body. This is Flagellar hook-basal body complex protein FliE from Helicobacter hepaticus (strain ATCC 51449 / 3B1).